Consider the following 311-residue polypeptide: MALPIILDCDPGHDDAIAIVLALASPELDVKAITSSAGNQTPDKTLRNVLRMLTLLKRSDIPVAGGAVKPLMRELIIADNVHGESGLDGPALPEPSFAPQNCTAVELMAKTLRESPQPVTLVATGPQTNVALLLNSHPELHAKIARIVIMGGAMGLGNWTPAAEFNIYVDPEAAEIVFQSGIPVLMAGLDVTHKAQIHTADIERFRAIGNPISTIVAELLDFFLEYHKDEKWGFTGAPLHDPCTIAWLLKAELFTTVERWVGVETQGKYTQGMTVVDYYFLTGNKPNATVMVDVDREGFVDLLAERLKFYG.

The active site involves His-240.

Belongs to the IUNH family. RihA subfamily.

Hydrolyzes cytidine or uridine to ribose and cytosine or uracil, respectively. The polypeptide is Pyrimidine-specific ribonucleoside hydrolase RihA (Salmonella arizonae (strain ATCC BAA-731 / CDC346-86 / RSK2980)).